The chain runs to 188 residues: Peptidyl-tRNA hydrolase (188 aa).

TRNA is bound at residue Phe-15. His-20 serves as the catalytic Proton acceptor. TRNA contacts are provided by Tyr-64, Asn-66, and Asn-112.

This sequence belongs to the PTH family. Monomer.

Its subcellular location is the cytoplasm. It carries out the reaction an N-acyl-L-alpha-aminoacyl-tRNA + H2O = an N-acyl-L-amino acid + a tRNA + H(+). In terms of biological role, hydrolyzes ribosome-free peptidyl-tRNAs (with 1 or more amino acids incorporated), which drop off the ribosome during protein synthesis, or as a result of ribosome stalling. Its function is as follows. Catalyzes the release of premature peptidyl moieties from peptidyl-tRNA molecules trapped in stalled 50S ribosomal subunits, and thus maintains levels of free tRNAs and 50S ribosomes. The protein is Peptidyl-tRNA hydrolase of Borrelia recurrentis (strain A1).